Here is a 336-residue protein sequence, read N- to C-terminus: Acetyl-coenzyme A carboxylase carboxyl transferase subunit alpha (336 aa).

In terms of domain architecture, CoA carboxyltransferase C-terminal spans 48–308 (ALEAKVESLR…KSMLIEELQG (261 aa)).

The protein belongs to the AccA family. Acetyl-CoA carboxylase is a heterohexamer composed of biotin carboxyl carrier protein (AccB), biotin carboxylase (AccC) and two subunits each of ACCase subunit alpha (AccA) and ACCase subunit beta (AccD).

It localises to the cytoplasm. The enzyme catalyses N(6)-carboxybiotinyl-L-lysyl-[protein] + acetyl-CoA = N(6)-biotinyl-L-lysyl-[protein] + malonyl-CoA. The protein operates within lipid metabolism; malonyl-CoA biosynthesis; malonyl-CoA from acetyl-CoA: step 1/1. In terms of biological role, component of the acetyl coenzyme A carboxylase (ACC) complex. First, biotin carboxylase catalyzes the carboxylation of biotin on its carrier protein (BCCP) and then the CO(2) group is transferred by the carboxyltransferase to acetyl-CoA to form malonyl-CoA. In Chlorobaculum parvum (strain DSM 263 / NCIMB 8327) (Chlorobium vibrioforme subsp. thiosulfatophilum), this protein is Acetyl-coenzyme A carboxylase carboxyl transferase subunit alpha.